The following is a 460-amino-acid chain: Serine--tRNA ligase (460 aa).

L-serine is bound at residue 255 to 257; it reads TAE. Residues 286 to 288 and Val302 contribute to the ATP site; that span reads RKE. Residue Glu309 participates in L-serine binding. 373-376 lines the ATP pocket; that stretch reads EMVS. An L-serine-binding site is contributed by Thr409.

It belongs to the class-II aminoacyl-tRNA synthetase family. Type-1 seryl-tRNA synthetase subfamily. Homodimer. The tRNA molecule binds across the dimer.

The protein localises to the cytoplasm. The catalysed reaction is tRNA(Ser) + L-serine + ATP = L-seryl-tRNA(Ser) + AMP + diphosphate + H(+). It carries out the reaction tRNA(Sec) + L-serine + ATP = L-seryl-tRNA(Sec) + AMP + diphosphate + H(+). The protein operates within aminoacyl-tRNA biosynthesis; selenocysteinyl-tRNA(Sec) biosynthesis; L-seryl-tRNA(Sec) from L-serine and tRNA(Sec): step 1/1. Its function is as follows. Catalyzes the attachment of serine to tRNA(Ser). Is also able to aminoacylate tRNA(Sec) with serine, to form the misacylated tRNA L-seryl-tRNA(Sec), which will be further converted into selenocysteinyl-tRNA(Sec). The polypeptide is Serine--tRNA ligase (Aeropyrum pernix (strain ATCC 700893 / DSM 11879 / JCM 9820 / NBRC 100138 / K1)).